The chain runs to 380 residues: MNREKSPIPGDGGDGLPPQATRRAGPPAAAAAAEYDISRMPDFPTRNPGHRRAHSEILSLPEDLDLCAAGGGDGPSLSDENDEELFSMFLDVEKLNSTCGASSEAEAESSSAGAAAAVAAAAAAAAHGARPKHQHSLSMDESMSIKAEELVGASPGTEGMSSAEAKKAVSAAKLAELALVDPKRAKRIWANRQSAARSKERKMRYIAELERKVQTLQTEATTLSAQLALLQRDTSGLTTENSELKLRLQTMEQQVHLQDALNDTLKSEVQRLKVATGQMANGGGMMMNFGGMPHQFGGNQQMFQNNQAMQSMLAAHQLQQLQLHPQAQQQQVLHPQHQQQQPLHPLQAQQLQQAARDLKMKSPMGGQSQWGDGKSGSSGN.

The tract at residues 1–57 is disordered; it reads MNREKSPIPGDGGDGLPPQATRRAGPPAAAAAAEYDISRMPDFPTRNPGHRRAHSEI. Positions 16 to 33 are enriched in low complexity; sequence LPPQATRRAGPPAAAAAA. Residues 56–108 are activation of RTBV promoter; that stretch reads EILSLPEDLDLCAAGGGDGPSLSDENDEELFSMFLDVEKLNSTCGASSEAEAE. The 64-residue stretch at 181–244 folds into the bZIP domain; that stretch reads DPKRAKRIWA…SGLTTENSEL (64 aa). Residues 183–204 are basic motif; it reads KRAKRIWANRQSAARSKERKMR. The segment at 209 to 244 is leucine-zipper; that stretch reads LERKVQTLQTEATTLSAQLALLQRDTSGLTTENSEL. Residues 283-357 are interaction with TBP2; that stretch reads GGMMMNFGGM…AQQLQQAARD (75 aa). The segment covering 326 to 355 has biased composition (low complexity); the sequence is QAQQQQVLHPQHQQQQPLHPLQAQQLQQAA. Residues 326–380 form a disordered region; sequence QAQQQQVLHPQHQQQQPLHPLQAQQLQQAARDLKMKSPMGGQSQWGDGKSGSSGN.

This sequence belongs to the bZIP family. As to quaternary structure, binds DNA as a homodimer or as a heterodimer with RF2b. The heterodimer binds stronger to DNA than the homodimer. Interacts with TBP2. As to expression, expressed at high levels in levels in leaf sheath, moderate levels in leaf blade, but not in roots. Predominantly expressed in vascular tissues.

Its subcellular location is the nucleus. Its function is as follows. Transcription factor probably involved in vascular development and shoot tissue organization. Binds to the DNA sequence 5'-CCGAGTGTGCCCCTGG-3' present in the promoter region Box II of the phloem-specific rice tungro bacilliform virus (RTBV) promoter. May regulate tissue-specific expression of the RTBV promoter and virus replication. The chain is Transcription factor RF2a (RF2a) from Oryza sativa subsp. japonica (Rice).